A 1486-amino-acid chain; its full sequence is Chromosome partition protein MukB (1486 aa).

ATP is bound at residue 34-41 (GGNGAGKS). Coiled coils occupy residues 326–418 (LEAD…QYNQ), 444–480 (LETFQAKELEATEKMLSLEQKMSMAQTAHSQFEQAYQ), and 509–603 (RHLA…RAPV). A flexible hinge region spans residues 666–783 (PGGSEDQRLN…EVPLFGRAAR (118 aa)). 3 coiled-coil regions span residues 835–923 (EAEI…AKLE), 977–1115 (EMLS…TAKA), and 1209–1266 (VEAI…QNVS).

The protein belongs to the SMC family. MukB subfamily. Homodimerization via its hinge domain. Binds to DNA via its C-terminal region. Interacts, and probably forms a ternary complex, with MukE and MukF via its C-terminal region. The complex formation is stimulated by calcium or magnesium. Interacts with tubulin-related protein FtsZ.

It localises to the cytoplasm. The protein localises to the nucleoid. Its function is as follows. Plays a central role in chromosome condensation, segregation and cell cycle progression. Functions as a homodimer, which is essential for chromosome partition. Involved in negative DNA supercoiling in vivo, and by this means organize and compact chromosomes. May achieve or facilitate chromosome segregation by condensation DNA from both sides of a centrally located replisome during cell division. This Escherichia coli O157:H7 protein is Chromosome partition protein MukB.